We begin with the raw amino-acid sequence, 891 residues long: DNA mismatch repair protein MutS (891 aa).

ATP is bound at residue 634 to 641 (GPNMGGKS).

Belongs to the DNA mismatch repair MutS family.

This protein is involved in the repair of mismatches in DNA. It is possible that it carries out the mismatch recognition step. This protein has a weak ATPase activity. This is DNA mismatch repair protein MutS from Burkholderia mallei (strain NCTC 10247).